A 599-amino-acid polypeptide reads, in one-letter code: Matrix metallopeptidase-21 (599 aa).

The N-terminal stretch at M1–E20 is a signal peptide. A propeptide spanning residues K21–K170 is cleaved from the precursor. C130 provides a ligand contact to Zn(2+). The interval D141–K170 is disordered. The span at T143–S159 shows a compositional bias: polar residues. Residue H309 coordinates Zn(2+). E310 is a catalytic residue. Zn(2+) is bound by residues H313 and H319. C355 and C586 are joined by a disulfide. 4 Hemopexin repeats span residues T356 to L415, S417 to V473, S474 to I522, and V529 to I585. Residue N398 is glycosylated (N-linked (GlcNAc...) asparagine).

The protein belongs to the peptidase M10A family. Post-translationally, the precursor is cleaved by a furin endopeptidase.

In terms of biological role, plays a specialized role in the generation of left-right asymmetry during embryogenesis. May act as a negative regulator of the NOTCH-signaling pathway. This is Matrix metallopeptidase-21 from Danio rerio (Zebrafish).